The following is a 217-amino-acid chain: Protein-L-isoaspartate O-methyltransferase 2 (217 aa).

Ser62 is a catalytic residue.

It belongs to the methyltransferase superfamily. L-isoaspartyl/D-aspartyl protein methyltransferase family.

It localises to the cytoplasm. It carries out the reaction [protein]-L-isoaspartate + S-adenosyl-L-methionine = [protein]-L-isoaspartate alpha-methyl ester + S-adenosyl-L-homocysteine. Functionally, catalyzes the methyl esterification of L-isoaspartyl residues in peptides and proteins that result from spontaneous decomposition of normal L-aspartyl and L-asparaginyl residues. It plays a role in the repair and/or degradation of damaged proteins. The protein is Protein-L-isoaspartate O-methyltransferase 2 of Geotalea uraniireducens (strain Rf4) (Geobacter uraniireducens).